The sequence spans 668 residues: Transketolase 2 (668 aa).

His-26 contacts substrate. Thiamine diphosphate contacts are provided by residues His-66 and 114-116 (GPL). Asp-155 lines the Mg(2+) pocket. Thiamine diphosphate is bound by residues Gly-156 and Asn-185. 2 residues coordinate Mg(2+): Asn-185 and Ile-187. Positions 261, 358, and 385 each coordinate substrate. A thiamine diphosphate-binding site is contributed by His-261. Glu-413 acts as the Proton donor in catalysis. A thiamine diphosphate-binding site is contributed by Phe-439. Substrate-binding residues include His-463, Asp-471, and Arg-522.

This sequence belongs to the transketolase family. Homodimer. Mg(2+) is required as a cofactor. The cofactor is Ca(2+). Mn(2+) serves as cofactor. It depends on Co(2+) as a cofactor. Requires thiamine diphosphate as cofactor.

It carries out the reaction D-sedoheptulose 7-phosphate + D-glyceraldehyde 3-phosphate = aldehydo-D-ribose 5-phosphate + D-xylulose 5-phosphate. Its function is as follows. Catalyzes the transfer of a two-carbon ketol group from a ketose donor to an aldose acceptor, via a covalent intermediate with the cofactor thiamine pyrophosphate. The sequence is that of Transketolase 2 (tktB) from Pasteurella multocida (strain Pm70).